A 163-amino-acid polypeptide reads, in one-letter code: Nucleotide-binding protein YajQ (163 aa).

This sequence belongs to the YajQ family.

In terms of biological role, nucleotide-binding protein. The chain is Nucleotide-binding protein YajQ from Salmonella heidelberg (strain SL476).